A 394-amino-acid chain; its full sequence is Phosphopentomutase (394 aa).

6 residues coordinate Mn(2+): aspartate 13, aspartate 286, histidine 291, aspartate 327, histidine 328, and histidine 339.

The protein belongs to the phosphopentomutase family. The cofactor is Mn(2+).

The protein localises to the cytoplasm. The enzyme catalyses 2-deoxy-alpha-D-ribose 1-phosphate = 2-deoxy-D-ribose 5-phosphate. It carries out the reaction alpha-D-ribose 1-phosphate = D-ribose 5-phosphate. It participates in carbohydrate degradation; 2-deoxy-D-ribose 1-phosphate degradation; D-glyceraldehyde 3-phosphate and acetaldehyde from 2-deoxy-alpha-D-ribose 1-phosphate: step 1/2. Functionally, isomerase that catalyzes the conversion of deoxy-ribose 1-phosphate (dRib-1-P) and ribose 1-phosphate (Rib-1-P) to deoxy-ribose 5-phosphate (dRib-5-P) and ribose 5-phosphate (Rib-5-P), respectively. The sequence is that of Phosphopentomutase from Bacillus anthracis (strain A0248).